The primary structure comprises 259 residues: Isoepoxydon dehydrogenase patN (259 aa).

NADP(+) contacts are provided by N96 and R125. Active-site proton donor residues include S143 and S144. Residues Y158, K162, and I191 each contribute to the NADP(+) site. Y158 functions as the Proton acceptor in the catalytic mechanism. The active-site Lowers pKa of active site Tyr is K162.

This sequence belongs to the short-chain dehydrogenases/reductases (SDR) family.

The protein resides in the cytoplasm. Its subcellular location is the cytosol. It catalyses the reaction isoepoxydon + NADP(+) = phyllostine + NADPH + H(+). It participates in mycotoxin biosynthesis; patulin biosynthesis. Isoepoxydon dehydrogenase; part of the gene cluster that mediates the biosynthesis of patulin, an acetate-derived tetraketide mycotoxin produced by several fungal species that shows antimicrobial properties against several bacteria. PatN catalyzes the conversion of isoepoxydon into phyllostine. The pathway begins with the synthesis of 6-methylsalicylic acid by the polyketide synthase (PKS) patK via condensation of acetate and malonate units. The 6-methylsalicylic acid decarboxylase patG then catalyzes the decarboxylation of 6-methylsalicylic acid to yield m-cresol (also known as 3-methylphenol). These first reactions occur in the cytosol. The intermediate m-cresol is then transported into the endoplasmic reticulum where the cytochrome P450 monooxygenase patH converts it to m-hydroxybenzyl alcohol, which is further converted to gentisyl alcohol by the cytochrome P450 monooxygenase patI. The oxidoreductases patJ and patO further convert gentisyl alcohol to isoepoxydon in the vacuole. PatN catalyzes then the transformation of isoepoxydon into phyllostine. The cluster protein patF is responsible for the conversion from phyllostine to neopatulin whereas the alcohol dehydrogenase patD converts neopatulin to E-ascladiol. The steps between isoepoxydon and E-ascladiol occur in the cytosol, and E-ascladiol is probably secreted to the extracellular space by one of the cluster-specific transporters patC or patM. Finally, the secreted patulin synthase patE catalyzes the conversion of E-ascladiol to patulin. The sequence is that of Isoepoxydon dehydrogenase patN from Aspergillus clavatus (strain ATCC 1007 / CBS 513.65 / DSM 816 / NCTC 3887 / NRRL 1 / QM 1276 / 107).